Here is a 443-residue protein sequence, read N- to C-terminus: Signal recognition particle 54 kDa protein (443 aa).

GTP is bound by residues 104 to 111 (GLQGSGKT), 184 to 188 (DTAGR), and 242 to 245 (TKLD).

The protein belongs to the GTP-binding SRP family. SRP54 subfamily. Part of the signal recognition particle protein translocation system, which is composed of SRP and FtsY. Archaeal SRP consists of a 7S RNA molecule of 300 nucleotides and two protein subunits: SRP54 and SRP19.

The protein localises to the cytoplasm. The enzyme catalyses GTP + H2O = GDP + phosphate + H(+). Functionally, involved in targeting and insertion of nascent membrane proteins into the cytoplasmic membrane. Binds to the hydrophobic signal sequence of the ribosome-nascent chain (RNC) as it emerges from the ribosomes. The SRP-RNC complex is then targeted to the cytoplasmic membrane where it interacts with the SRP receptor FtsY. The protein is Signal recognition particle 54 kDa protein of Methanosarcina mazei (strain ATCC BAA-159 / DSM 3647 / Goe1 / Go1 / JCM 11833 / OCM 88) (Methanosarcina frisia).